A 148-amino-acid polypeptide reads, in one-letter code: NADH-quinone oxidoreductase subunit A (148 aa).

3 consecutive transmembrane segments (helical) span residues 14 to 34, 68 to 88, and 98 to 118; these read WAFA…LVGG, FYLV…LYAW, and VGFV…VYLV.

It belongs to the complex I subunit 3 family. As to quaternary structure, NDH-1 is composed of 13 different subunits. Subunits NuoA, H, J, K, L, M, N constitute the membrane sector of the complex.

It is found in the cell inner membrane. It catalyses the reaction a quinone + NADH + 5 H(+)(in) = a quinol + NAD(+) + 4 H(+)(out). NDH-1 shuttles electrons from NADH, via FMN and iron-sulfur (Fe-S) centers, to quinones in the respiratory chain. The immediate electron acceptor for the enzyme in this species is believed to be ubiquinone. Couples the redox reaction to proton translocation (for every two electrons transferred, four hydrogen ions are translocated across the cytoplasmic membrane), and thus conserves the redox energy in a proton gradient. This Klebsiella pneumoniae subsp. pneumoniae (strain ATCC 700721 / MGH 78578) protein is NADH-quinone oxidoreductase subunit A.